A 769-amino-acid chain; its full sequence is Glutathione biosynthesis bifunctional protein GshAB (769 aa).

The tract at residues 1 to 347 is glutamate--cysteine ligase; the sequence is MLDSFKEDPN…QLADENENNI (347 aa). In terms of domain architecture, ATP-grasp spans 514–768; that stretch reads KLVLAEHDIR…IGDKILDFLF (255 aa). 541–599 is an ATP binding site; the sequence is SLFEDKQIVVKPKSTNYGWGISIFKNKFTLEDYQEALNIAFSYDSSVIIEEFIPGDEFR. Residues aspartate 721, glutamate 738, and asparagine 740 each contribute to the Mg(2+) site. Residues aspartate 721, glutamate 738, and asparagine 740 each coordinate Mn(2+).

It in the N-terminal section; belongs to the glutamate--cysteine ligase type 1 family. Type 2 subfamily. As to quaternary structure, monomer. The cofactor is Mg(2+). Mn(2+) serves as cofactor.

The catalysed reaction is L-cysteine + L-glutamate + ATP = gamma-L-glutamyl-L-cysteine + ADP + phosphate + H(+). It carries out the reaction gamma-L-glutamyl-L-cysteine + glycine + ATP = glutathione + ADP + phosphate + H(+). Its pathway is sulfur metabolism; glutathione biosynthesis; glutathione from L-cysteine and L-glutamate: step 1/2. The protein operates within sulfur metabolism; glutathione biosynthesis; glutathione from L-cysteine and L-glutamate: step 2/2. In terms of biological role, synthesizes glutathione from L-glutamate and L-cysteine via gamma-L-glutamyl-L-cysteine. In Listeria monocytogenes serovar 1/2a (strain ATCC BAA-679 / EGD-e), this protein is Glutathione biosynthesis bifunctional protein GshAB.